Consider the following 190-residue polypeptide: Iron-sulfur assembly protein 1 (190 aa).

Positions 49 to 71 are disordered; the sequence is PSLKPSAAGSGSTAPKPVTEREI. Residues Cys116, Cys180, and Cys182 each contribute to the Fe cation site.

This sequence belongs to the HesB/IscA family.

The protein resides in the mitochondrion matrix. Involved in the assembly of mitochondrial and cytoplasmic iron-sulfur proteins. Probably involved in the binding of an intermediate of Fe/S cluster assembly. The chain is Iron-sulfur assembly protein 1 (isa1) from Schizosaccharomyces pombe (strain 972 / ATCC 24843) (Fission yeast).